The following is a 1059-amino-acid chain: Carbamoyl phosphate synthase large chain (1059 aa).

Residues 1 to 401 (MPKRKDIQKI…SLLKACRSLE (401 aa)) form a carboxyphosphate synthetic domain region. Positions 129, 169, 175, 176, 208, 210, 215, 241, 242, 243, 284, and 298 each coordinate ATP. In terms of domain architecture, ATP-grasp 1 spans 133–327 (KQLMEELGQP…IAKLAAKIAV (195 aa)). Mg(2+) contacts are provided by Q284, E298, and N300. Mn(2+) is bound by residues Q284, E298, and N300. Residues 402 to 546 (VGVDHNELPA…YSTYGFENES (145 aa)) form an oligomerization domain region. The interval 547 to 929 (VKSSKESVLV…ALYKAFEASY (383 aa)) is carbamoyl phosphate synthetic domain. The ATP-grasp 2 domain maps to 671–861 (EQALKELDIP…MAQVATRLIL (191 aa)). ATP-binding residues include R707, S746, I748, E752, G777, V778, H779, S780, Q820, and E832. Mg(2+) contacts are provided by Q820, E832, and N834. Positions 820, 832, and 834 each coordinate Mn(2+). Positions 930 to 1059 (LHLPNFGNVV…ESRSFTTEAI (130 aa)) constitute an MGS-like domain. The segment at 930 to 1059 (LHLPNFGNVV…ESRSFTTEAI (130 aa)) is allosteric domain.

The protein belongs to the CarB family. In terms of assembly, composed of two chains; the small (or glutamine) chain promotes the hydrolysis of glutamine to ammonia, which is used by the large (or ammonia) chain to synthesize carbamoyl phosphate. Tetramer of heterodimers (alpha,beta)4. The cofactor is Mg(2+). Mn(2+) is required as a cofactor.

It carries out the reaction hydrogencarbonate + L-glutamine + 2 ATP + H2O = carbamoyl phosphate + L-glutamate + 2 ADP + phosphate + 2 H(+). It catalyses the reaction hydrogencarbonate + NH4(+) + 2 ATP = carbamoyl phosphate + 2 ADP + phosphate + 2 H(+). The protein operates within amino-acid biosynthesis; L-arginine biosynthesis; carbamoyl phosphate from bicarbonate: step 1/1. It functions in the pathway pyrimidine metabolism; UMP biosynthesis via de novo pathway; (S)-dihydroorotate from bicarbonate: step 1/3. Functionally, large subunit of the glutamine-dependent carbamoyl phosphate synthetase (CPSase). CPSase catalyzes the formation of carbamoyl phosphate from the ammonia moiety of glutamine, carbonate, and phosphate donated by ATP, constituting the first step of 2 biosynthetic pathways, one leading to arginine and/or urea and the other to pyrimidine nucleotides. The large subunit (synthetase) binds the substrates ammonia (free or transferred from glutamine from the small subunit), hydrogencarbonate and ATP and carries out an ATP-coupled ligase reaction, activating hydrogencarbonate by forming carboxy phosphate which reacts with ammonia to form carbamoyl phosphate. In Streptococcus gordonii (strain Challis / ATCC 35105 / BCRC 15272 / CH1 / DL1 / V288), this protein is Carbamoyl phosphate synthase large chain.